The primary structure comprises 309 residues: Fe-S cluster assembly protein dre2 (309 aa).

Residues 1-132 (MTTTIVLASP…LRRPAQVEAV (132 aa)) form an N-terminal SAM-like domain region. Positions 133 to 195 (PLKLSTKKSA…DALVSDEETQ (63 aa)) are linker. The [2Fe-2S] cluster site is built by cysteine 207, cysteine 216, cysteine 219, and cysteine 221. The fe-S binding site A stretch occupies residues 207-221 (CSKPGKKKRCKNCTC). [4Fe-4S] cluster-binding residues include cysteine 265, cysteine 268, cysteine 276, and cysteine 279. 2 consecutive short sequence motifs (cx2C motif) follow at residues 265–268 (CGSC) and 276–279 (CSGC). Residues 265–279 (CGSCYLGDAFRCSGC) form a fe-S binding site B region.

Belongs to the anamorsin family. As to quaternary structure, monomer. Interacts with TAH18. Interacts with MIA40. It depends on [2Fe-2S] cluster as a cofactor. Requires [4Fe-4S] cluster as cofactor.

The protein localises to the cytoplasm. Its subcellular location is the mitochondrion intermembrane space. In terms of biological role, component of the cytosolic iron-sulfur (Fe-S) protein assembly (CIA) machinery required for the maturation of extramitochondrial Fe-S proteins. Part of an electron transfer chain functioning in an early step of cytosolic Fe-S biogenesis, facilitating the de novo assembly of a [4Fe-4S] cluster on the scaffold complex CFD1-NBP35. Electrons are transferred to DRE2 from NADPH via the FAD- and FMN-containing protein TAH18. TAH18-DRE2 are also required for the assembly of the diferric tyrosyl radical cofactor of ribonucleotide reductase (RNR), probably by providing electrons for reduction during radical cofactor maturation in the catalytic small subunit RNR2. This Schizosaccharomyces japonicus (strain yFS275 / FY16936) (Fission yeast) protein is Fe-S cluster assembly protein dre2.